Consider the following 362-residue polypeptide: Lipoprotein p35 (362 aa).

The N-terminal stretch at 1 to 30 is a signal peptide; it reads MKIKKIKLLKALALTGAFGIVATVPVIVSS. A lipid anchor (N-palmitoyl cysteine) is attached at C31. C31 is lipidated: S-diacylglycerol cysteine. Positions 33-53 are disordered; the sequence is STSENNGNGNGNGGTDGNTQQ.

This sequence belongs to the p35 lipoprotein family. The N-terminus is blocked.

Its subcellular location is the cell membrane. Major M.penetrans antigen. This Malacoplasma penetrans (strain HF-2) (Mycoplasma penetrans) protein is Lipoprotein p35.